Here is a 123-residue protein sequence, read N- to C-terminus: Zinc metalloproteinase-disintegrin-like jerdohagin (123 aa).

One can recognise a Peptidase M12B domain in the interval 6–52 (RYLYIRHDREACTCHANSCIMSAYFSNSHVQYENYINDCKPQCILNE). Position 12 (histidine 12) interacts with Zn(2+). Residues cysteine 19 and cysteine 24 are joined by a disulfide bond. Cysteine 48 and asparagine 51 together coordinate Ca(2+). A Disintegrin domain is found at 53–80 (LHSWVECESGECCEQCRSECDIAESCTN). Disulfide bonds link cysteine 59–cysteine 65, cysteine 64–cysteine 78, cysteine 72–cysteine 90, and cysteine 106–cysteine 116. Positions 71–73 (ECD) match the D/ECD-tripeptide motif.

This sequence belongs to the venom metalloproteinase (M12B) family. P-III subfamily. P-IIIa sub-subfamily. In terms of assembly, monomer. It depends on Zn(2+) as a cofactor. Post-translationally, the N-terminus is blocked. As to expression, expressed by the venom gland.

It is found in the secreted. Its activity is regulated as follows. Its proteolytic and hemorrhagic activities are inhibited by EDTA, but not by PMSF. In terms of biological role, snake venom metalloproteinase that has high hemorrhagic activity and degrades the alpha-chain of fibrinogen (FGA), leaving the beta- and the gamma-chain intact. It may also inhibit platelet aggregation. Cleaves insulin B chain at '25-Phe-|-Val-26', '26-Val-|-Asn-27', '29-His-|-Leu-30', '30-Leu-|-Cys-31', '33-Ser-|-His-34', '35-Leu-|-Val-36', '40-Tyr-|-Leu-41', '41-Leu-|-Val-42', '42-Val-|-Cys-43', '43-Cys-|-Gly-44', '44-Gly-|-Glu-45', '46-Arg-|-Gly-47', '47-Gly-|-Phe-48', '49-Phe-|-Tyr-50' and '52-Pro-|-Lys-53' bonds. Also cleaves human prothrombin (72 kDa) and activation fragment F1 (27 kDa) of activated human prothrombin, to generate two new proteins of 68 and 23 kDa. The polypeptide is Zinc metalloproteinase-disintegrin-like jerdohagin (Protobothrops jerdonii (Jerdon's pitviper)).